Here is a 218-residue protein sequence, read N- to C-terminus: Octanoyltransferase (218 aa).

One can recognise a BPL/LPL catalytic domain in the interval 32-211 (INTYDEIWFL…KLSQLLNVSI (180 aa)). Substrate-binding positions include 75 to 82 (RGGQITYH), 142 to 144 (SLG), and 155 to 157 (GLS). C173 acts as the Acyl-thioester intermediate in catalysis.

It belongs to the LipB family.

It is found in the cytoplasm. It catalyses the reaction octanoyl-[ACP] + L-lysyl-[protein] = N(6)-octanoyl-L-lysyl-[protein] + holo-[ACP] + H(+). The protein operates within protein modification; protein lipoylation via endogenous pathway; protein N(6)-(lipoyl)lysine from octanoyl-[acyl-carrier-protein]: step 1/2. Its function is as follows. Catalyzes the transfer of endogenously produced octanoic acid from octanoyl-acyl-carrier-protein onto the lipoyl domains of lipoate-dependent enzymes. Lipoyl-ACP can also act as a substrate although octanoyl-ACP is likely to be the physiological substrate. The polypeptide is Octanoyltransferase (Buchnera aphidicola subsp. Schizaphis graminum (strain Sg)).